Reading from the N-terminus, the 768-residue chain is Cullin-3 (768 aa).

Ser2 bears the N-acetylserine mark. The interaction with KLHL18 stretch occupies residues 2–41 (SNLSKGTGSRKDTKMRIRAFPMTMDEKYVNSIWDLLKNAI). Ser585 carries the phosphoserine modification. A disordered region spans residues 677-698 (VAAKQGESDPERKETRQKVDDD). Residues 682–698 (GESDPERKETRQKVDDD) are compositionally biased toward basic and acidic residues. A Cullin neddylation domain is found at 698–760 (DRKHEIEAAI…REYLARTPED (63 aa)). Lys712 participates in a covalent cross-link: Glycyl lysine isopeptide (Lys-Gly) (interchain with G-Cter in NEDD8).

The protein belongs to the cullin family. As to quaternary structure, forms neddylation-dependent homodimers. Component of multiple BCR (BTB-CUL3-RBX1) E3 ubiquitin-protein ligase complexes formed of CUL3, RBX1 and a variable BTB domain-containing protein acting as both, adapter to cullin and substrate recognition subunit. The BCR complex may be active as a heterodimeric complex, in which NEDD8, covalently attached to one CUL3 molecule, binds to the C-terminus of a second CUL3 molecule. Interacts with RBX1, RNF7 and TIP120A/CAND1. Part of the BCR(SPOP) containing SPOP, and of BCR containing homodimeric SPOPL or the heterodimer formed by SPOP and SPOPL. Part of the probable BCR(KLHL9-KLHL13) complex with BTB domain proteins KLHL9 and KLHL13. Part of the BCR(KLHL41) complex containing KLHL41. Component of the BCR(KLHL12) E3 ubiquitin ligase complex, at least composed of CUL3 and KLHL12 and RBX1. Component of the BCR(KLHL3) E3 ubiquitin ligase complex, at least composed of CUL3 and KLHL3 and RBX1. Part of the BCR(ENC1) complex containing ENC1. Part of a complex consisting of BMI1/PCGF4, CUL3 and SPOP. Part of a complex consisting of BRMS1, CUL3 and SPOP. Component of the BCR(KLHL21) E3 ubiquitin ligase complex, at least composed of CUL3, KLHL21 and RBX1. Component of the BCR(KLHL22) E3 ubiquitin ligase complex, at least composed of CUL3, KLHL22 and RBX1. Component of the BCR(KLHL25) E3 ubiquitin ligase complex, at least composed of CUL3, KLHL25 and RBX1. Part of a complex consisting of MACROH2A1, CUL3 and SPOP. Component of the BCR(KLHL42) E3 ubiquitin ligase complex, at least composed of CUL3 and KLHL42. Component of the BCR(KBTBD8) E3 ubiquitin ligase complex, at least composed of CUL3, KBTBD8 and RBX1. Interacts with KLHL42 (via the BTB domain). Interacts with KATNA1; the interaction is enhanced by KLHL42. Interacts with KCTD5, KLHL9, KLHL11, KLHL13, GAN, ZBTB16, KLHL3, KLHL15, KLHL20, KLHL36, GMCL2, BTBD1. Part of a complex that contains CUL3, RBX1 and GAN. Interacts (via BTB domain) with KLHL17; the interaction regulates surface GRIK2 expression. Interacts with KCTD7. Part of the BCR(GAN) complex containing GAN. Part of the BCR(KEAP1) complex containing KEAP1. Interacts with KAT5 and ATF2. Interacts with KCTD17 in the BCR(KCTD17) E3 ubiquitin ligase complex, at least composed of CUL3, KCTD17 and RBX1. Interacts (when neddylated) with ARIH1; leading to activate the E3 ligase activity of ARIH1. Interacts with COPS9. Interacts with PPP2R5B; this interaction is indirect and mediated through KLHL15-binding and leads to PPP2R5B proteasomal degradation. Interacts with RBBP8/CtIP; this interaction is indirect and mediated through KLHL15-binding and leads to RBBP8 proteasomal degradation. Interacts with KLHL24 in the BCR(KLHL24) E3 ubiquitin ligase complex, composed of CUL3, RBX1 and KLHL24. Interacts with RHOBTB2. Interacts with CYCE. Interacts with KLHL10. Interacts with AURKA and KLHL18 (via BTB domain). Interacts (unneddylated form) with DCUN1D1, DCUN1D2, DCUN1D3, DCUN1D4 and DCUN1D5; these interactions promote the cullin neddylation. Component of a BCR3 (BTB-CUL3-RBX1) E3 ubiquitin ligase complex, also named Cul3-RING ubiquitin ligase complex CUL3(KBTBD6/7), composed of CUL3, RBX1, KBTBD6 and KBTBD7. Component of the BCR(KBTBD2) E3 ubiquitin ligase complex, at least composed of CUL3, KBTBD2 and RBX1. Interacts with KBTBD2 (via the BTB domain). Component of the BCR(KBTBD4) E3 ubiquitin ligase complex, at least composed of CUL3, KBTBD4 and RBX1. In terms of processing, neddylated. Attachment of NEDD8 is required for the E3 ubiquitin-protein ligase activity of the BCR complex. Deneddylated via its interaction with the COP9 signalosome (CSN) complex. As to expression, widely expressed, with highest expression in brain, spleen and testis. In the testis, it is mainly expressed in spermatids.

The protein localises to the nucleus. The protein resides in the golgi apparatus. It localises to the cell projection. It is found in the cilium. Its subcellular location is the flagellum. The protein localises to the cytoplasm. The protein resides in the cytoskeleton. It localises to the spindle. It is found in the microtubule organizing center. Its subcellular location is the centrosome. The protein localises to the spindle pole. It participates in protein modification; protein ubiquitination. In terms of biological role, core component of multiple cullin-RING-based BCR (BTB-CUL3-RBX1) E3 ubiquitin-protein ligase complexes which mediate the ubiquitination and subsequent proteasomal degradation of target proteins. BCR complexes and ARIH1 collaborate in tandem to mediate ubiquitination of target proteins. As a scaffold protein may contribute to catalysis through positioning of the substrate and the ubiquitin-conjugating enzyme. The E3 ubiquitin-protein ligase activity of the complex is dependent on the neddylation of the cullin subunit and is inhibited by the association of the deneddylated cullin subunit with TIP120A/CAND1. The functional specificity of the BCR complex depends on the BTB domain-containing protein as the substrate recognition component. BCR(KLHL42) is involved in ubiquitination of KATNA1. BCR(SPOP) is involved in ubiquitination of BMI1/PCGF4, BRMS1, MACROH2A1 and DAXX, GLI2 and GLI3. Can also form a cullin-RING-based BCR (BTB-CUL3-RBX1) E3 ubiquitin-protein ligase complex containing homodimeric SPOPL or the heterodimer formed by SPOP and SPOPL; these complexes have lower ubiquitin ligase activity. BCR(KLHL9-KLHL13) controls the dynamic behavior of AURKB on mitotic chromosomes and thereby coordinates faithful mitotic progression and completion of cytokinesis. BCR(KLHL12) is involved in ER-Golgi transport by regulating the size of COPII coats, thereby playing a key role in collagen export, which is required for embryonic stem (ES) cells division: BCR(KLHL12) acts by mediating monoubiquitination of SEC31 (SEC31A or SEC31B). BCR(KLHL3) acts as a regulator of ion transport in the distal nephron; by mediating ubiquitination of WNK4. The BCR(KLHL20) E3 ubiquitin ligase complex is involved in interferon response and anterograde Golgi to endosome transport: it mediates both ubiquitination leading to degradation and 'Lys-33'-linked ubiquitination. The BCR(KLHL21) E3 ubiquitin ligase complex regulates localization of the chromosomal passenger complex (CPC) from chromosomes to the spindle midzone in anaphase and mediates the ubiquitination of AURKB. The BCR(KLHL22) ubiquitin ligase complex mediates monoubiquitination of PLK1, leading to PLK1 dissociation from phosphoreceptor proteins and subsequent removal from kinetochores, allowing silencing of the spindle assembly checkpoint (SAC) and chromosome segregation. The BCR(KLHL22) ubiquitin ligase complex is also responsible for the amino acid-stimulated 'Lys-48' polyubiquitination and proteasomal degradation of DEPDC5. Through the degradation of DEPDC5, releases the GATOR1 complex-mediated inhibition of the TORC1 pathway. The BCR(KLHL25) ubiquitin ligase complex is involved in translational homeostasis by mediating ubiquitination and subsequent degradation of hypophosphorylated EIF4EBP1 (4E-BP1). The BCR(KLHL25) ubiquitin ligase complex is also involved in lipid synthesis by mediating ubiquitination and degradation of ACLY. The BCR(KBTBD8) complex acts by mediating monoubiquitination of NOLC1 and TCOF1, leading to remodel the translational program of differentiating cells in favor of neural crest specification. Involved in ubiquitination of cyclin E and of cyclin D1 (in vitro) thus involved in regulation of G1/S transition. Involved in the ubiquitination of KEAP1, ENC1 and KLHL41. In concert with ATF2 and RBX1, promotes degradation of KAT5 thereby attenuating its ability to acetylate and activate ATM. The BCR(KCTD17) E3 ubiquitin ligase complex mediates ubiquitination and degradation of TCHP, a down-regulator of cilium assembly, thereby inducing ciliogenesis. The BCR(KLHL24) E3 ubiquitin ligase complex mediates ubiquitination of KRT14, controls KRT14 levels during keratinocytes differentiation, and is essential for skin integrity. The BCR(KLHL18) E3 ubiquitin ligase complex mediates the ubiquitination of AURKA leading to its activation at the centrosome which is required for initiating mitotic entry. The BCR(KEAP1) E3 ubiquitin ligase complex acts as a key sensor of oxidative and electrophilic stress by mediating ubiquitination and degradation of NFE2L2/NRF2, a transcription factor regulating expression of many cytoprotective genes. As part of the CUL3(KBTBD6/7) E3 ubiquitin ligase complex functions mediates 'Lys-48' ubiquitination and proteasomal degradation of TIAM1. By controlling the ubiquitination of that RAC1 guanine exchange factors (GEF), regulates RAC1 signal transduction and downstream biological processes including the organization of the cytoskeleton, cell migration and cell proliferation. The BCR(KBTBD4) E3 ubiquitin ligase complex targets CoREST corepressor complex components RCOR1, KDM1A/LSD1 and HDAC2 for proteasomal degradation with RCOR1 likely to be the primary target while degradation of KDM1A and HDAC2 is likely due to their association with RCOR1. It also targets RCOR3, MIER2 and MIER3 for proteasomal degradation as well as associated proteins ZNF217 and RREB1 with degradation being dependent on the presence of an ELM2 domain in the target proteins. The BCR(ARMC5) complex mediates premature transcription termination of transcripts that are unfavorably configured for transcriptional elongation by mediating ubiquitination of Pol II subunit POLR2A. Required for 'Lys-63'-linked ubiquitination of large ribosomal subunit protein MRPL12. This chain is Cullin-3 (Cul3), found in Mus musculus (Mouse).